Consider the following 350-residue polypeptide: Galactokinase (350 aa).

Substrate is bound at residue 14-17 (EHTD). ATP contacts are provided by residues Ser-46 and 96–102 (GAGLSSS). The Mg(2+) site is built by Ser-102 and Glu-134. The active-site Proton acceptor is Asp-146. Tyr-196 provides a ligand contact to substrate.

Belongs to the GHMP kinase family. GalK subfamily.

The protein localises to the cytoplasm. It carries out the reaction alpha-D-galactose + ATP = alpha-D-galactose 1-phosphate + ADP + H(+). The protein operates within carbohydrate metabolism; galactose metabolism. Functionally, catalyzes the transfer of the gamma-phosphate of ATP to D-galactose to form alpha-D-galactose-1-phosphate (Gal-1-P). The protein is Galactokinase of Thermotoga petrophila (strain ATCC BAA-488 / DSM 13995 / JCM 10881 / RKU-1).